The primary structure comprises 108 residues: Small ribosomal subunit protein uS17 (108 aa).

Positions 1–26 (MREKMAEATETQASETSTRGRPKTRV) are disordered. A compositionally biased stretch (low complexity) spans 8–17 (ATETQASETS).

Belongs to the universal ribosomal protein uS17 family. Part of the 30S ribosomal subunit.

One of the primary rRNA binding proteins, it binds specifically to the 5'-end of 16S ribosomal RNA. The chain is Small ribosomal subunit protein uS17 from Myxococcus xanthus (strain DK1622).